The chain runs to 339 residues: MRVYYDRDADLNLIKSKKVAIIGYGSQGRAHALNLKDSGAQNVVIALKAGSPTVKKAEADGFKVMTVAEAAGWADLMMMATPDELQADIYKADIAPNIRDGAAIAFAHGLNVHFGLIEPKASVDVVMIAPKGPGHTVRGEYQKGGGVPCLVAVHQNASGNALELALSYACGVGGGRSGIIETNFREECETDLFGEQVVLCGGLVELIRAGFETLVEAGYAPEMAYFECLHEVKLIVDLIYEGGIANMNYSISNTAEWGEYVTGPRIITEETKAEMKRVLKDIQTGKFTSDWMQEYRSGAARFKGIRRMNDSHQIEEVGAKLRGMMPWIGKNKLVDKSVN.

Positions 1-182 constitute a KARI N-terminal Rossmann domain; the sequence is MRVYYDRDAD…GGGRSGIIET (182 aa). Residues 24–27, Lys-48, Ser-51, Thr-53, and 83–86 each bind NADP(+); these read YGSQ and DELQ. The active site involves His-108. Gly-134 provides a ligand contact to NADP(+). The region spanning 183 to 328 is the KARI C-terminal knotted domain; the sequence is NFREECETDL…AKLRGMMPWI (146 aa). Mg(2+) is bound by residues Asp-191, Glu-195, Glu-227, and Glu-231. Position 252 (Ser-252) interacts with substrate.

This sequence belongs to the ketol-acid reductoisomerase family. The cofactor is Mg(2+).

It catalyses the reaction (2R)-2,3-dihydroxy-3-methylbutanoate + NADP(+) = (2S)-2-acetolactate + NADPH + H(+). The enzyme catalyses (2R,3R)-2,3-dihydroxy-3-methylpentanoate + NADP(+) = (S)-2-ethyl-2-hydroxy-3-oxobutanoate + NADPH + H(+). It participates in amino-acid biosynthesis; L-isoleucine biosynthesis; L-isoleucine from 2-oxobutanoate: step 2/4. It functions in the pathway amino-acid biosynthesis; L-valine biosynthesis; L-valine from pyruvate: step 2/4. Involved in the biosynthesis of branched-chain amino acids (BCAA). Catalyzes an alkyl-migration followed by a ketol-acid reduction of (S)-2-acetolactate (S2AL) to yield (R)-2,3-dihydroxy-isovalerate. In the isomerase reaction, S2AL is rearranged via a Mg-dependent methyl migration to produce 3-hydroxy-3-methyl-2-ketobutyrate (HMKB). In the reductase reaction, this 2-ketoacid undergoes a metal-dependent reduction by NADPH to yield (R)-2,3-dihydroxy-isovalerate. The sequence is that of Ketol-acid reductoisomerase (NADP(+)) from Rhizobium rhizogenes (strain K84 / ATCC BAA-868) (Agrobacterium radiobacter).